An 879-amino-acid chain; its full sequence is DNA mismatch repair protein MutS (879 aa).

Residue 639-646 coordinates ATP; that stretch reads GPNMGGKS.

The protein belongs to the DNA mismatch repair MutS family.

Its function is as follows. This protein is involved in the repair of mismatches in DNA. It is possible that it carries out the mismatch recognition step. This protein has a weak ATPase activity. The sequence is that of DNA mismatch repair protein MutS from Aromatoleum aromaticum (strain DSM 19018 / LMG 30748 / EbN1) (Azoarcus sp. (strain EbN1)).